A 117-amino-acid polypeptide reads, in one-letter code: Large ribosomal subunit protein bL20 (117 aa).

Belongs to the bacterial ribosomal protein bL20 family.

Binds directly to 23S ribosomal RNA and is necessary for the in vitro assembly process of the 50S ribosomal subunit. It is not involved in the protein synthesizing functions of that subunit. The sequence is that of Large ribosomal subunit protein bL20 from Rippkaea orientalis (strain PCC 8801 / RF-1) (Cyanothece sp. (strain PCC 8801)).